The sequence spans 122 residues: UPF0102 protein CE1920 (122 aa).

This sequence belongs to the UPF0102 family.

The protein is UPF0102 protein CE1920 of Corynebacterium efficiens (strain DSM 44549 / YS-314 / AJ 12310 / JCM 11189 / NBRC 100395).